A 313-amino-acid polypeptide reads, in one-letter code: MLDNVLRIATRQSPLALWQAHYVKDKLMASHPGLVVELVPMVTRGDVILDTPLAKVGGKGLFVKELEVALLENRADIAVHSMKDVPVEFPQGLGLVTICEREDPRDAFVSNNYDSLDALPAGSIVGTSSLRRQCQLAERRPDLIIRSLRGNVGTRLSKLDNGEYDAIILAVAGLKRLGLESRIRAALPPEISLPAVGQGAVGIECRLDDTRTRELLAALNHHETALRVTAERAMNTRLEGGCQVPIGSYAELIDGEIWLRALVGAPDGSQIIRGERRGAPQDAEQMGISLAEELLNNGAREILAEVYNGDAPA.

At cysteine 242 the chain carries S-(dipyrrolylmethanemethyl)cysteine.

The protein belongs to the HMBS family. As to quaternary structure, monomer. Dipyrromethane is required as a cofactor.

It catalyses the reaction 4 porphobilinogen + H2O = hydroxymethylbilane + 4 NH4(+). Its pathway is porphyrin-containing compound metabolism; protoporphyrin-IX biosynthesis; coproporphyrinogen-III from 5-aminolevulinate: step 2/4. Tetrapolymerization of the monopyrrole PBG into the hydroxymethylbilane pre-uroporphyrinogen in several discrete steps. This is Porphobilinogen deaminase from Escherichia coli O17:K52:H18 (strain UMN026 / ExPEC).